Reading from the N-terminus, the 447-residue chain is CBL-interacting serine/threonine-protein kinase 9 (447 aa).

In terms of domain architecture, Protein kinase spans 19 to 274 (YEMGRTLGEG…IAELLEDEWF (256 aa)). ATP contacts are provided by residues 25 to 33 (LGEGSFAKV) and K48. D142 (proton acceptor) is an active-site residue. The tract at residues 160 to 189 (DFGLSAFSRQVREDGLLHTACGTPNYVAPE) is activation loop. S164 bears the Phosphoserine mark. Position 178 is a phosphothreonine (T178). The NAF domain occupies 312 to 336 (EKPVSMNAFELISSSSEFSLENLFE). The tract at residues 343–372 (KKETRFTSQRSASEIMSKMEETAKPLGFNV) is PPI.

The protein belongs to the protein kinase superfamily. CAMK Ser/Thr protein kinase family. SNF1 subfamily. As to quaternary structure, interacts with CBL2 and CBL3. Requires Mn(2+) as cofactor. As to expression, expressed at low levels in roots and shoots. Detected in root vascular bundles and in the leaf vascular tissue and hydathode, but not in root tips.

The protein resides in the cytoplasm. It is found in the nucleus. The enzyme catalyses L-seryl-[protein] + ATP = O-phospho-L-seryl-[protein] + ADP + H(+). The catalysed reaction is L-threonyl-[protein] + ATP = O-phospho-L-threonyl-[protein] + ADP + H(+). In terms of biological role, CIPK serine-threonine protein kinases interact with CBL proteins. Binding of a CBL protein to the regulatory NAF domain of CIPK protein lead to the activation of the kinase in a calcium-dependent manner. Involved in K(+) homeostasis under low-K(+) stress. This Arabidopsis thaliana (Mouse-ear cress) protein is CBL-interacting serine/threonine-protein kinase 9 (CIPK9).